The following is a 982-amino-acid chain: Cell division cycle-associated protein 2 (982 aa).

Over residues 75–87 the composition is skewed to polar residues; sequence VKTSSGKSTSSLQ. Residues 75–97 are disordered; sequence VKTSSGKSTSSLQKARRRSTVGV. Phosphoserine occurs at positions 100, 122, and 133. 2 disordered regions span residues 192–216 and 274–315; these read SGFP…NYLS and TPLS…CGSS. Composition is skewed to polar residues over residues 207-216 and 275-315; these read SQDSPDNYLS and PLSS…CGSS. Phosphoserine is present on residues S286, S296, and S306. T309 is subject to Phosphothreonine. Residues 379–436 enclose the PP1-binding domain; that stretch reads KRKRVTFGEDLSPEVFDESLPANTPLCKGGTPVRPRTVKTTSPLQSPVHEQFLQPNFD. 2 positions are modified to phosphoserine: S390 and S397. Disordered stretches follow at residues 400-473, 489-545, 568-638, and 651-716; these read ANTP…NTCS, TRTS…KSYR, KPLL…QSQV, and ASER…PQSQ. A Phosphothreonine modification is found at T402. S424 carries the phosphoserine modification. 2 stretches are compositionally biased toward polar residues: residues 451-473 and 498-512; these read SFAN…NTCS and TLSS…TTQA. Residues 518–545 are compositionally biased toward basic residues; the sequence is KMSRRKSREKKHTSAALPKKKQVLKSYR. S572 and S595 each carry phosphoserine. Polar residues predominate over residues 651–668; that stretch reads ASERGPNASTRDTGSEGN. Residues 669 to 685 are compositionally biased toward basic and acidic residues; sequence TRAESKCQSAKEPKPGT. S735 bears the Phosphoserine mark. A Glycyl lysine isopeptide (Lys-Gly) (interchain with G-Cter in SUMO2) cross-link involves residue K741. Residues 910 to 982 form a disordered region; that stretch reads ECPSSKEETI…SLKGESAQLP (73 aa). Phosphoserine is present on S913. Low complexity predominate over residues 931-942; that stretch reads VSGSESQGVGSS. S950 is modified (phosphoserine). The segment covering 952–964 has biased composition (polar residues); it reads CGSTLTDANSATQ. S973 is subject to Phosphoserine.

Interacts with PPP1CC. Phosphorylated by CDK1. May regulate its subcellular location.

It is found in the nucleus. Its function is as follows. Regulator of chromosome structure during mitosis required for condensin-depleted chromosomes to retain their compact architecture through anaphase. Acts by mediating the recruitment of phopsphatase PP1-gamma subunit (PPP1CC) to chromatin at anaphase and into the following interphase. At anaphase onset, its association with chromatin targets a pool of PPP1CC to dephosphorylate substrates. The chain is Cell division cycle-associated protein 2 (Cdca2) from Mus musculus (Mouse).